A 74-amino-acid polypeptide reads, in one-letter code: Conotoxin Vc6.11 (74 aa).

The first 19 residues, 1 to 19 (MEKLTILLLVAAVLMSTQA), serve as a signal peptide directing secretion. Residues 20–41 (LIQEQRQKAKINLFSKRKPSAE) constitute a propeptide that is removed on maturation. 2 cysteine pairs are disulfide-bonded: Cys-55/Cys-66 and Cys-61/Cys-71.

Belongs to the conotoxin O2 superfamily. Expressed by the venom duct.

It is found in the secreted. Functionally, inhibits voltage-gated ion channels. This chain is Conotoxin Vc6.11, found in Conus victoriae (Queen Victoria cone).